Here is a 352-residue protein sequence, read N- to C-terminus: Quinolinate synthase (352 aa).

Iminosuccinate-binding residues include His-48 and Ser-69. Cys-114 provides a ligand contact to [4Fe-4S] cluster. Iminosuccinate is bound by residues 140-142 and Ser-157; that span reads YAN. Cys-201 serves as a coordination point for [4Fe-4S] cluster. Iminosuccinate contacts are provided by residues 227–229 and Thr-244; that span reads HPE. A [4Fe-4S] cluster-binding site is contributed by Cys-298.

Belongs to the quinolinate synthase family. Type 1 subfamily. Requires [4Fe-4S] cluster as cofactor.

The protein localises to the cytoplasm. It catalyses the reaction iminosuccinate + dihydroxyacetone phosphate = quinolinate + phosphate + 2 H2O + H(+). Its pathway is cofactor biosynthesis; NAD(+) biosynthesis; quinolinate from iminoaspartate: step 1/1. Catalyzes the condensation of iminoaspartate with dihydroxyacetone phosphate to form quinolinate. The protein is Quinolinate synthase of Pseudomonas aeruginosa (strain UCBPP-PA14).